The primary structure comprises 94 residues: Large ribosomal subunit protein bL28 (94 aa).

This sequence belongs to the bacterial ribosomal protein bL28 family.

This Hyphomonas neptunium (strain ATCC 15444) protein is Large ribosomal subunit protein bL28.